Consider the following 249-residue polypeptide: Isoprenyl transferase (249 aa).

The active site involves Asp-29. Asp-29 contributes to the Mg(2+) binding site. Substrate-binding positions include 30–33 (GNGR), Trp-34, Arg-42, His-46, and 74–76 (STE). Asn-77 functions as the Proton acceptor in the catalytic mechanism. Substrate contacts are provided by residues Trp-78, Arg-80, Arg-197, and 203–205 (RLS). Position 216 (Glu-216) interacts with Mg(2+).

The protein belongs to the UPP synthase family. Homodimer. Mg(2+) is required as a cofactor.

Its function is as follows. Catalyzes the condensation of isopentenyl diphosphate (IPP) with allylic pyrophosphates generating different type of terpenoids. In Trichormus variabilis (strain ATCC 29413 / PCC 7937) (Anabaena variabilis), this protein is Isoprenyl transferase.